The chain runs to 643 residues: MGGGGMKKIVLALLLLLLPVVCGDVSVYKVWSPYDPPNSPILHVDISEQVLYLGVVNKDEYEHDVIVKVECNGKTWGSGLIPLPPNSHIEKIVEVRVPISDDKEHDAKISLIENGKTIASTTVKVRPYFPVDVKNVTCEDSYKIGNTEVCYSNWFDITLKSNPTAKSDYIAKVWINVKDGDNIIYNGKNDFKTVYIPLGEEVTVSFKVPKIVLDKEKFTVETNVEIMNVTHTIDGVEETIQRRDDSGIYYDYKSVTKYYYFPVVIKNVELYRKIDENTSEFVKNFYDSANILDDEIRDILSDKYLQKDDVLPRYYVIDDPTLAILKITVENKYDRDVKAKLTVKYDNVIFTKIINIDKKEKKDVFIPIYTKKGSKNIVVTINPIDADTLIFNRSYSINIDPKPIPPVIIEKIILPKDEEIGEETNISGYVIIGKRYNMTIFIKNIYNKTLSGKITIDDNFKDGIANYSKEIPFTIEPHQIKEINVPIIFYKEVNGDLKITVSVKGGAKDYTSLAHFYAISPIGIVRIYYNNTLLLGKINVIKENSGIYSAKPIAGFNNTCVVILRNNLNSKVDCDVWIEVIDKDGKVRAKSGIKTVKLDNYSEAKVAFPIFFEEGFEGYTVAHIIPKSVENVDIIYTEVMEST.

A helical membrane pass occupies residues 9-29 (IVLALLLLLLPVVCGDVSVYK).

It is found in the membrane. This is an uncharacterized protein from Methanocaldococcus jannaschii (strain ATCC 43067 / DSM 2661 / JAL-1 / JCM 10045 / NBRC 100440) (Methanococcus jannaschii).